The chain runs to 186 residues: Serine hydrolase RBBP9 (186 aa).

The interval 63 to 67 is involved in binding to RB1; it reads LHCDE. Residues Ser75, Asp138, and His165 each act as charge relay system in the active site.

Belongs to the RBBP9 family. As to quaternary structure, interacts with RB1; the interaction disrupts RB1 binding to E2F1. Interacts with RBL1 and RBL2. As to expression, highly expressed in the spleen, testis and kidney. Also found in the heart, liver, lung and brain.

The enzyme catalyses valacyclovir + H2O = acyclovir + L-valine + H(+). Functionally, serine hydrolase. Catalyzes the hydrolytic activation of amino acid ester of the antiviral prodrug valacyclovir to its corresponding active drug, acyclovir. May negatively regulate basal or autocrine TGF-beta signaling by suppressing SMAD2-SMAD3 phosphorylation. May play a role in the transformation process due to its capacity to confer resistance to the growth-inhibitory effects of TGF-beta through interaction with RB1 and the subsequent displacement of E2F1. The polypeptide is Serine hydrolase RBBP9 (Rattus norvegicus (Rat)).